The sequence spans 54 residues: Small ribosomal subunit protein uS14 (54 aa).

Zn(2+)-binding residues include C19, C22, C37, and C40.

Belongs to the universal ribosomal protein uS14 family. Zinc-binding uS14 subfamily. As to quaternary structure, part of the 30S ribosomal subunit. Requires Zn(2+) as cofactor.

In terms of biological role, binds 16S rRNA, required for the assembly of 30S particles. This chain is Small ribosomal subunit protein uS14, found in Sulfurisphaera tokodaii (strain DSM 16993 / JCM 10545 / NBRC 100140 / 7) (Sulfolobus tokodaii).